Consider the following 141-residue polypeptide: Large ribosomal subunit protein uL11 (141 aa).

Belongs to the universal ribosomal protein uL11 family. In terms of assembly, part of the ribosomal stalk of the 50S ribosomal subunit. Interacts with L10 and the large rRNA to form the base of the stalk. L10 forms an elongated spine to which L12 dimers bind in a sequential fashion forming a multimeric L10(L12)X complex. In terms of processing, one or more lysine residues are methylated.

Its function is as follows. Forms part of the ribosomal stalk which helps the ribosome interact with GTP-bound translation factors. In Streptococcus suis (strain 05ZYH33), this protein is Large ribosomal subunit protein uL11.